We begin with the raw amino-acid sequence, 688 residues long: Glycine--tRNA ligase beta subunit (688 aa).

This sequence belongs to the class-II aminoacyl-tRNA synthetase family. As to quaternary structure, tetramer of two alpha and two beta subunits.

The protein resides in the cytoplasm. The enzyme catalyses tRNA(Gly) + glycine + ATP = glycyl-tRNA(Gly) + AMP + diphosphate. This is Glycine--tRNA ligase beta subunit from Aliivibrio fischeri (strain MJ11) (Vibrio fischeri).